The sequence spans 436 residues: GDP-mannose 6-dehydrogenase (436 aa).

NAD(+) is bound by residues Y10, V11, D30, K35, T86, and T124. GDP-alpha-D-mannuronate-binding residues include E161, K210, N214, H217, N225, Y256, Y257, R259, and G265. Residue C268 is part of the active site. K271 contacts NAD(+). Residue K324 coordinates GDP-alpha-D-mannuronate. R331 lines the NAD(+) pocket.

It belongs to the UDP-glucose/GDP-mannose dehydrogenase family.

It carries out the reaction GDP-alpha-D-mannose + 2 NAD(+) + H2O = GDP-alpha-D-mannuronate + 2 NADH + 3 H(+). It functions in the pathway glycan biosynthesis; alginate biosynthesis. Its function is as follows. Catalyzes the oxidation of guanosine diphospho-D-mannose (GDP-D-mannose) to GDP-D-mannuronic acid, a precursor for alginate polymerization. The alginate layer causes a mucoid phenotype and is essential for cyst formation. This Azotobacter vinelandii protein is GDP-mannose 6-dehydrogenase (algD).